A 132-amino-acid polypeptide reads, in one-letter code: MSKTLNIIWQYLRAFVLIYACLYAGIFIASLLPVTIPGSIIGMLILSVLLALQILPAKWVNPGCYVLIRYMALLFVPIGVGVMQYFDLLRAQFGPVVVSCAVSTLVVFLVVSWSSQLVHGERKVVGQKGSEE.

A run of 4 helical transmembrane segments spans residues 5-25 (LNII…LYAG), 26-46 (IFIA…MLIL), 63-83 (GCYV…VGVM), and 93-113 (FGPV…VVSW).

This sequence belongs to the UPF0299 family.

The protein resides in the cell inner membrane. This is UPF0299 membrane protein YohJ from Shigella flexneri serotype 5b (strain 8401).